A 203-amino-acid chain; its full sequence is uncharacterized protein (203 aa).

3 consecutive transmembrane segments (helical) span residues 60 to 80 (IIDM…FFLY), 114 to 134 (WFQL…YFCT), and 157 to 177 (LQLG…ALIL). 192–199 (GAMSEGKT) serves as a coordination point for ATP.

The protein resides in the membrane. This is an uncharacterized protein from Saccharomyces cerevisiae (strain ATCC 204508 / S288c) (Baker's yeast).